The sequence spans 430 residues: Histidine--tRNA ligase (430 aa).

It belongs to the class-II aminoacyl-tRNA synthetase family. As to quaternary structure, homodimer.

It localises to the cytoplasm. It catalyses the reaction tRNA(His) + L-histidine + ATP = L-histidyl-tRNA(His) + AMP + diphosphate + H(+). In Acinetobacter baumannii (strain ATCC 17978 / DSM 105126 / CIP 53.77 / LMG 1025 / NCDC KC755 / 5377), this protein is Histidine--tRNA ligase.